The following is a 248-amino-acid chain: tRNA (guanine-N(1)-)-methyltransferase (248 aa).

S-adenosyl-L-methionine is bound by residues G117 and 137-142 (IGDFVL).

Belongs to the RNA methyltransferase TrmD family. In terms of assembly, homodimer.

Its subcellular location is the cytoplasm. The catalysed reaction is guanosine(37) in tRNA + S-adenosyl-L-methionine = N(1)-methylguanosine(37) in tRNA + S-adenosyl-L-homocysteine + H(+). Functionally, specifically methylates guanosine-37 in various tRNAs. In Polynucleobacter necessarius subsp. necessarius (strain STIR1), this protein is tRNA (guanine-N(1)-)-methyltransferase.